The chain runs to 244 residues: Uracil phosphoribosyltransferase (244 aa).

GTP contacts are provided by residues lysine 59, arginine 68, and 102–105; that span reads YSKI. Arginine 112 lines the 5-phospho-alpha-D-ribose 1-diphosphate pocket. GTP is bound at residue arginine 129. Position 137 (arginine 137) interacts with 5-phospho-alpha-D-ribose 1-diphosphate. Arginine 158 lines the GTP pocket. 5-phospho-alpha-D-ribose 1-diphosphate contacts are provided by residues aspartate 164 and 164–172; that span reads DPMCATAGS. Uracil is bound by residues isoleucine 229 and 234-236; that span reads GDF. Aspartate 235 contacts 5-phospho-alpha-D-ribose 1-diphosphate.

Belongs to the UPRTase family. Monomer. Forms homodimers in presence of substrates and homotetramers in the presence of GTP. Requires Mg(2+) as cofactor.

The enzyme catalyses UMP + diphosphate = 5-phospho-alpha-D-ribose 1-diphosphate + uracil. Its pathway is pyrimidine metabolism; UMP biosynthesis via salvage pathway; UMP from uracil: step 1/1. With respect to regulation, allosterically activated by GTP. Binding of GTP leads to 5-time activation of the enzyme. Functionally, catalyzes the conversion of uracil and 5-phospho-alpha-D-ribose 1-diphosphate (PRPP) to UMP and diphosphate. This Toxoplasma gondii protein is Uracil phosphoribosyltransferase (uprt).